The following is a 200-amino-acid chain: LexA repressor (200 aa).

The segment at residues 28-48 is a DNA-binding region (H-T-H motif); the sequence is RAEIARILGFKSANAAEEHIK. Catalysis depends on for autocatalytic cleavage activity residues S118 and K155.

The protein belongs to the peptidase S24 family. As to quaternary structure, homodimer.

The enzyme catalyses Hydrolysis of Ala-|-Gly bond in repressor LexA.. Functionally, represses a number of genes involved in the response to DNA damage (SOS response), including recA and lexA. In the presence of single-stranded DNA, RecA interacts with LexA causing an autocatalytic cleavage which disrupts the DNA-binding part of LexA, leading to derepression of the SOS regulon and eventually DNA repair. This Cellvibrio japonicus (strain Ueda107) (Pseudomonas fluorescens subsp. cellulosa) protein is LexA repressor.